A 322-amino-acid chain; its full sequence is Sideroflexin-1 (322 aa).

The residue at position 2 (serine 2) is an N-acetylserine. Residues 2 to 102 lie on the Mitochondrial matrix side of the membrane; sequence SGELPPNINI…MSAQVPMNMT (101 aa). The helical transmembrane segment at 103-120 threads the bilayer; sequence ITGCMMTFYRTTPAVLFW. Residues 121 to 146 lie on the Mitochondrial intermembrane side of the membrane; the sequence is QWINQSFNAVVNYTNRSGDAPLTVNE. A helical membrane pass occupies residues 147–167; sequence LGTAYVSATTGAVATALGLNA. Over 168-174 the chain is Mitochondrial matrix; sequence LTKHVSP. Residues 175–195 form a helical membrane-spanning segment; it reads LIGRFVPFAAVAAANCINIPL. Topologically, residues 196–228 are mitochondrial intermembrane; sequence MRQRELRAGIPVTDENGNRLGESANAAKQAITQ. The helical transmembrane segment at 229–249 threads the bilayer; the sequence is VVISRILMAAPGMAIPPFIMN. Residues 250 to 266 are Mitochondrial matrix-facing; that stretch reads TLEKKAFLKRFPWMSAP. A helical membrane pass occupies residues 267-287; that stretch reads IQVGLVGFCLVFATPLCCALF. Topologically, residues 288–322 are mitochondrial intermembrane; the sequence is PQKSSMSVTSLEAELQAKIRETSPELRRVYFNKGL.

The protein belongs to the sideroflexin family.

The protein localises to the mitochondrion inner membrane. It carries out the reaction L-serine(in) = L-serine(out). It catalyses the reaction L-alanine(in) = L-alanine(out). The enzyme catalyses L-cysteine(in) = L-cysteine(out). Its function is as follows. Amino acid transporter importing serine, an essential substrate of the mitochondrial branch of the one-carbon pathway, into mitochondria. Mitochondrial serine is then converted to glycine and formate, which exits to the cytosol where it is used to generate the charged folates that serve as one-carbon donors. May also transport other amino acids including alanine and cysteine. The sequence is that of Sideroflexin-1 (SFXN1) from Sus scrofa (Pig).